A 409-amino-acid polypeptide reads, in one-letter code: Pleckstrin homology domain-containing family O member 1 (409 aa).

A disordered region spans residues 1-24 (MMKKNNSAKRGPQDGNQQPAPPEK). In terms of domain architecture, PH spans 21 to 132 (PPEKVGWVRK…WINALNSAIT (112 aa)). Positions 133-193 (RAKNRILDEV…MLTLDLIQEE (61 aa)) are interaction with capping proteins (CPs). The interval 136 to 308 (NRILDEVTVE…LPNPGQLSRI (173 aa)) is interaction with ATM, CKIP, IFP35 and NMI. Residues 218–267 (LAGSRRRADSDRIQPSADRASSLSRPWEKTDKGATYTPQAPKKLTPTEKG) form a disordered region. Phosphoserine is present on residues serine 227 and serine 271. The segment at 308–409 (IQDLVARKLE…PHSQYRKSLM (102 aa)) is negative regulator of AP-1 activity. Disordered regions lie at residues 325-350 (EVQGLGDGKRKAKDPPRSPPDSESEQ) and 390-409 (TPDSHLRQTTPHSQYRKSLM). Over residues 331 to 340 (DGKRKAKDPP) the composition is skewed to basic and acidic residues. Position 342 is a phosphoserine (serine 342). Over residues 390-402 (TPDSHLRQTTPHS) the composition is skewed to polar residues.

Heterodimer or homodimer. Interacts with CK2 and actin capping subunits (capping protein CP-alpha and CP-beta). CKIP1 and CK2 together inhibit the activity of actin capping protein at the barbed ends of actin filaments. Interacts with ATM, IFP35, JUN, JUND, NMI and PI3K. Interacts with AKT1, AKT2 and AKT3 (each isozyme of PKB), PtdIns(3,5)P2, PtdIns(4,5)P2 and PtdIns(3,4,5)P2. In terms of processing, C-terminal fragments could be released during apoptosis via caspase-3-dependent cleavage. As to expression, abundantly expressed in skeletal muscle and heart, moderately in kidney, liver, brain and placenta and sparingly in the pancreas and lung. Easily detectable in cell lines such as MOLT-4, HEK293 and Jurkat.

It is found in the cell membrane. It localises to the nucleus. The protein resides in the cytoplasm. Its function is as follows. Plays a role in the regulation of the actin cytoskeleton through its interactions with actin capping protein (CP). May function to target CK2 to the plasma membrane thereby serving as an adapter to facilitate the phosphorylation of CP by protein kinase 2 (CK2). Appears to target ATM to the plasma membrane. Appears to also inhibit tumor cell growth by inhibiting AKT-mediated cell-survival. Also implicated in PI3K-regulated muscle differentiation, the regulation of AP-1 activity (plasma membrane bound AP-1 regulator that translocates to the nucleus) and the promotion of apoptosis induced by tumor necrosis factor TNF. When bound to PKB, it inhibits it probably by decreasing PKB level of phosphorylation. This is Pleckstrin homology domain-containing family O member 1 (PLEKHO1) from Homo sapiens (Human).